The chain runs to 94 residues: MTKSELMEKLSAKQPTLPAKEIENMVKGILEFISQSLENGDRVEVRGFGSFSLHHRQPRLGRNPKTGDSVNLSAKSVPYFKAGKELKARVDVQA.

Belongs to the bacterial histone-like protein family. In terms of assembly, heterodimer of an alpha and a beta chain.

In terms of biological role, this protein is one of the two subunits of integration host factor, a specific DNA-binding protein that functions in genetic recombination as well as in transcriptional and translational control. This is Integration host factor subunit beta (ihfB) from Haemophilus influenzae (strain ATCC 51907 / DSM 11121 / KW20 / Rd).